Here is a 536-residue protein sequence, read N- to C-terminus: Global nitrogen regulator NrpR (536 aa).

Residues 7 to 72 (VEILSILSEA…EITEKGIEEL (66 aa)) form a winged helix-turn-helix region. NRD regions lie at residues 80–314 (RIGS…KGKF) and 315–536 (KVTP…YDDI).

It belongs to the NrpR family. As to quaternary structure, homotetramer. Binds to a single operator as a dimer and cooperatively to two operators as a dimer pair.

Under nitrogen limitation, binding of the intracellular nitrogen metabolite 2-oxoglutarate to NrpR decreases the binding affinity of NrpR to DNA, leading to initiation of transcription. Its function is as follows. Transcriptional repressor of nitrogen fixation and assimilation genes. Binds to two tandem operators in the glnA and nif promoters, thereby blocking transcription of the genes. This Methanococcus maripaludis (strain DSM 14266 / JCM 13030 / NBRC 101832 / S2 / LL) protein is Global nitrogen regulator NrpR.